The primary structure comprises 155 residues: Small ribosomal subunit protein uS7 (155 aa).

The protein belongs to the universal ribosomal protein uS7 family. In terms of assembly, part of the 30S ribosomal subunit. Contacts proteins S9 and S11.

Its function is as follows. One of the primary rRNA binding proteins, it binds directly to 16S rRNA where it nucleates assembly of the head domain of the 30S subunit. Is located at the subunit interface close to the decoding center, probably blocks exit of the E-site tRNA. The chain is Small ribosomal subunit protein uS7 from Xylella fastidiosa (strain M12).